The following is a 423-amino-acid chain: Glutamate-1-semialdehyde 2,1-aminomutase (423 aa).

Residue K258 is modified to N6-(pyridoxal phosphate)lysine.

The protein belongs to the class-III pyridoxal-phosphate-dependent aminotransferase family. HemL subfamily. Pyridoxal 5'-phosphate serves as cofactor.

It localises to the cytoplasm. The enzyme catalyses (S)-4-amino-5-oxopentanoate = 5-aminolevulinate. It functions in the pathway porphyrin-containing compound metabolism; protoporphyrin-IX biosynthesis; 5-aminolevulinate from L-glutamyl-tRNA(Glu): step 2/2. The chain is Glutamate-1-semialdehyde 2,1-aminomutase from Pyrobaculum arsenaticum (strain DSM 13514 / JCM 11321 / PZ6).